The sequence spans 729 residues: Fatty acid oxidation complex subunit alpha (729 aa).

The interval 1–189 (MLYKGDTLYL…KIGLVDGVVK (189 aa)) is enoyl-CoA hydratase/isomerase. D296 provides a ligand contact to substrate. The interval 311-729 (ETPKQAAVLG…ARPVGDLKTA (419 aa)) is 3-hydroxyacyl-CoA dehydrogenase. NAD(+)-binding positions include M324, D343, 400 to 402 (VVE), K407, and S429. H450 functions as the For 3-hydroxyacyl-CoA dehydrogenase activity in the catalytic mechanism. N453 contributes to the NAD(+) binding site. Substrate contacts are provided by N500 and Y660. The segment at 708-729 (RHNEPYYPPVEPARPVGDLKTA) is disordered.

It in the N-terminal section; belongs to the enoyl-CoA hydratase/isomerase family. In the C-terminal section; belongs to the 3-hydroxyacyl-CoA dehydrogenase family. Heterotetramer of two alpha chains (FadB) and two beta chains (FadA).

It carries out the reaction a (3S)-3-hydroxyacyl-CoA + NAD(+) = a 3-oxoacyl-CoA + NADH + H(+). It catalyses the reaction a (3S)-3-hydroxyacyl-CoA = a (2E)-enoyl-CoA + H2O. The enzyme catalyses a 4-saturated-(3S)-3-hydroxyacyl-CoA = a (3E)-enoyl-CoA + H2O. The catalysed reaction is (3S)-3-hydroxybutanoyl-CoA = (3R)-3-hydroxybutanoyl-CoA. It carries out the reaction a (3Z)-enoyl-CoA = a 4-saturated (2E)-enoyl-CoA. It catalyses the reaction a (3E)-enoyl-CoA = a 4-saturated (2E)-enoyl-CoA. It functions in the pathway lipid metabolism; fatty acid beta-oxidation. Its function is as follows. Involved in the aerobic and anaerobic degradation of long-chain fatty acids via beta-oxidation cycle. Catalyzes the formation of 3-oxoacyl-CoA from enoyl-CoA via L-3-hydroxyacyl-CoA. It can also use D-3-hydroxyacyl-CoA and cis-3-enoyl-CoA as substrate. The polypeptide is Fatty acid oxidation complex subunit alpha (Escherichia coli O17:K52:H18 (strain UMN026 / ExPEC)).